We begin with the raw amino-acid sequence, 139 residues long: MRFILLIALVFAVLDGINCQIAGGLSDVNASEYTGAAWNSVPEINSKNNGQNYMVPIKVVKAQVQVVAGTNTVLEVLVGESTCPRQGSVQASQVTAANCPLKSGGKRELYKVSIWEKPWENFKQTKAEKIRGVKPDEKI.

Residues 1-19 form the signal peptide; sequence MRFILLIALVFAVLDGINC. N29 carries N-linked (GlcNAc...) asparagine glycosylation. The Secondary area of contact signature appears at 65–69; it reads QVVAG. An intrachain disulfide couples C83 to C99.

It belongs to the cystatin family.

In terms of biological role, cysteine protease inhibitor which inhibits members of the peptidase C1 family. Does not inhibit asparaginyl endopeptidase. May play a protective role against exogenous cysteine proteases derived from soil bacteria or fungi, or rotting fruits and vegetation. The polypeptide is Cystatin cpi-1 (Caenorhabditis elegans).